A 180-amino-acid polypeptide reads, in one-letter code: Inorganic pyrophosphatase (180 aa).

Substrate-binding residues include Lys-28, Arg-42, and Tyr-54. 3 residues coordinate Mg(2+): Asp-66, Asp-71, and Asp-102. Residue Tyr-139 coordinates substrate.

The protein belongs to the PPase family. Homohexamer. Mg(2+) serves as cofactor.

The protein resides in the cytoplasm. The enzyme catalyses diphosphate + H2O = 2 phosphate + H(+). Its function is as follows. Hydrolyzes PPi generated in anabolic reactions. In terms of biological role, catalyzes the hydrolysis of inorganic pyrophosphate (PPi) forming two phosphate ions. The polypeptide is Inorganic pyrophosphatase (Pseudanabaena sp. (strain PCC 6903)).